A 492-amino-acid chain; its full sequence is Catalase isozyme 3 (492 aa).

Residues H65 and N138 contribute to the active site. Y348 contacts heme.

It belongs to the catalase family. In terms of assembly, homotetramer. Requires heme as cofactor.

The protein localises to the peroxisome. It catalyses the reaction 2 H2O2 = O2 + 2 H2O. Occurs in almost all aerobically respiring organisms and serves to protect cells from the toxic effects of hydrogen peroxide. The polypeptide is Catalase isozyme 3 (CAT3) (Nicotiana plumbaginifolia (Leadwort-leaved tobacco)).